Consider the following 476-residue polypeptide: Glycogen synthase (476 aa).

Lysine 15 is a binding site for ADP-alpha-D-glucose.

Belongs to the glycosyltransferase 1 family. Bacterial/plant glycogen synthase subfamily.

It carries out the reaction [(1-&gt;4)-alpha-D-glucosyl](n) + ADP-alpha-D-glucose = [(1-&gt;4)-alpha-D-glucosyl](n+1) + ADP + H(+). The protein operates within glycan biosynthesis; glycogen biosynthesis. Functionally, synthesizes alpha-1,4-glucan chains using ADP-glucose. The protein is Glycogen synthase of Haemophilus influenzae (strain 86-028NP).